A 210-amino-acid polypeptide reads, in one-letter code: Potassium-transporting ATPase KdpC subunit (210 aa).

Residues 13–33 traverse the membrane as a helical segment; that stretch reads LVTLVLLLVCGLAYPLILTGI.

The protein belongs to the KdpC family. The system is composed of three essential subunits: KdpA, KdpB and KdpC.

It localises to the cell membrane. Functionally, part of the high-affinity ATP-driven potassium transport (or Kdp) system, which catalyzes the hydrolysis of ATP coupled with the electrogenic transport of potassium into the cytoplasm. This subunit acts as a catalytic chaperone that increases the ATP-binding affinity of the ATP-hydrolyzing subunit KdpB by the formation of a transient KdpB/KdpC/ATP ternary complex. The polypeptide is Potassium-transporting ATPase KdpC subunit (Clostridium kluyveri (strain ATCC 8527 / DSM 555 / NBRC 12016 / NCIMB 10680 / K1)).